Here is a 278-residue protein sequence, read N- to C-terminus: Pre-hexon-linking protein VIII (278 aa).

Positions 114–199 are excised as a propeptide; the sequence is SPSLLSGGAS…ILRYRRLGQQ (86 aa).

This sequence belongs to the adenoviridae hexon-linking protein family. As to quaternary structure, interacts with the peripentonal hexons as well as the hexons in the facets. Part of a complex composed of the core-capsid bridging protein, the endosome lysis protein VI and the hexon-linking protein VIII; these interactions bridge the virus core to the capsid. Cleaved by the viral protease during virion maturation. May cause the middle segment to be shed from the capsid.

It is found in the virion. Its subcellular location is the host nucleus. In terms of biological role, structural component of the virion that acts as a cement protein on the capsid interior and which glue the peripentonal hexons and group-of-nine hexons together. The chain is Pre-hexon-linking protein VIII from Pantherophis guttatus (Corn snake).